The sequence spans 136 residues: MSRQDVRQEIQRLIEEYQLVGELLTNLQAQHATVSELLEELTTALDGVRLLKGGAGERLVHIGAGLFVKGVFETKEVLTPLGAGYHAFLDLDNAERVLQERIEEYSRLKTSLEENIGKLAERAEQIRQVLERLGIR.

This sequence belongs to the prefoldin subunit alpha family. As to quaternary structure, heterohexamer of two alpha and four beta subunits.

The protein resides in the cytoplasm. Molecular chaperone capable of stabilizing a range of proteins. Seems to fulfill an ATP-independent, HSP70-like function in archaeal de novo protein folding. The polypeptide is Prefoldin subunit alpha (Pyrobaculum arsenaticum (strain DSM 13514 / JCM 11321 / PZ6)).